The primary structure comprises 361 residues: Chorismate synthase (361 aa).

Residues Arg-48 and Arg-54 each coordinate NADP(+). FMN contacts are provided by residues 125–127, 238–239, Gly-278, 293–297, and Arg-319; these read RSS, NA, and KPTSS.

The protein belongs to the chorismate synthase family. In terms of assembly, homotetramer. It depends on FMNH2 as a cofactor.

It carries out the reaction 5-O-(1-carboxyvinyl)-3-phosphoshikimate = chorismate + phosphate. The protein operates within metabolic intermediate biosynthesis; chorismate biosynthesis; chorismate from D-erythrose 4-phosphate and phosphoenolpyruvate: step 7/7. Its function is as follows. Catalyzes the anti-1,4-elimination of the C-3 phosphate and the C-6 proR hydrogen from 5-enolpyruvylshikimate-3-phosphate (EPSP) to yield chorismate, which is the branch point compound that serves as the starting substrate for the three terminal pathways of aromatic amino acid biosynthesis. This reaction introduces a second double bond into the aromatic ring system. In Photorhabdus laumondii subsp. laumondii (strain DSM 15139 / CIP 105565 / TT01) (Photorhabdus luminescens subsp. laumondii), this protein is Chorismate synthase.